The sequence spans 338 residues: Ketol-acid reductoisomerase (NADP(+)) (338 aa).

A KARI N-terminal Rossmann domain is found at 1–181 (MKVYYDKDAD…GGTRGGVIET (181 aa)). NADP(+)-binding positions include 24–27 (YGSQ), Arg47, and Ser52. Residue His107 is part of the active site. Gly133 is a binding site for NADP(+). The KARI C-terminal knotted domain occupies 182–327 (TFKEETETDL…AKLRDMMPWI (146 aa)). Asp190, Glu194, Glu226, and Glu230 together coordinate Mg(2+). Ser251 is a binding site for substrate.

The protein belongs to the ketol-acid reductoisomerase family. Mg(2+) serves as cofactor.

The catalysed reaction is (2R)-2,3-dihydroxy-3-methylbutanoate + NADP(+) = (2S)-2-acetolactate + NADPH + H(+). It catalyses the reaction (2R,3R)-2,3-dihydroxy-3-methylpentanoate + NADP(+) = (S)-2-ethyl-2-hydroxy-3-oxobutanoate + NADPH + H(+). It functions in the pathway amino-acid biosynthesis; L-isoleucine biosynthesis; L-isoleucine from 2-oxobutanoate: step 2/4. It participates in amino-acid biosynthesis; L-valine biosynthesis; L-valine from pyruvate: step 2/4. Its function is as follows. Involved in the biosynthesis of branched-chain amino acids (BCAA). Catalyzes an alkyl-migration followed by a ketol-acid reduction of (S)-2-acetolactate (S2AL) to yield (R)-2,3-dihydroxy-isovalerate. In the isomerase reaction, S2AL is rearranged via a Mg-dependent methyl migration to produce 3-hydroxy-3-methyl-2-ketobutyrate (HMKB). In the reductase reaction, this 2-ketoacid undergoes a metal-dependent reduction by NADPH to yield (R)-2,3-dihydroxy-isovalerate. The sequence is that of Ketol-acid reductoisomerase (NADP(+)) from Nitrosomonas europaea (strain ATCC 19718 / CIP 103999 / KCTC 2705 / NBRC 14298).